The primary structure comprises 282 residues: Transcription repressor MYB4 (282 aa).

HTH myb-type domains lie at 9–61 and 62–116; these read KAHT…INYL and RPDL…RRKL. 2 consecutive DNA-binding regions (H-T-H motif) follow at residues 37–61 and 89–112; these read WRSLPKAAGLLRCGKSCRLRWINYL and WSLIAGRLPGRTDNEIKNYWNTHI. The interval 119 to 145 is disordered; that stretch reads RGIDPTSHRPIQESSASQDSKPTQLEP. Residues 130–145 show a composition bias toward polar residues; sequence QESSASQDSKPTQLEP.

Interacts with BHLH12/MYC1 and BHLH42/TT8. Interacts with SAD2. In terms of tissue distribution, widely expressed at low level. Highly expressed in siliques. Weakly expressed in seedlings, young and mature leaves, cauline leaves, stems, flower buds and roots.

The protein resides in the nucleus. Functionally, transcription repressor involved in regulation of protection against UV. Mediates transcriptional repression of CYP73A5, the gene encoding trans-cinnamate 4-monooxygenase, thereby regulating the accumulation of the UV-protectant compound sinapoylmalate. This chain is Transcription repressor MYB4 (MYB4), found in Arabidopsis thaliana (Mouse-ear cress).